We begin with the raw amino-acid sequence, 540 residues long: CTP synthase (540 aa).

An amidoligase domain region spans residues 1–267; the sequence is MKIMKFIFIT…GKLVTKKLNL (267 aa). Serine 15 lines the CTP pocket. Residue serine 15 participates in UTP binding. ATP is bound at residue 16–21; that stretch reads SLGKGI. L-glutamine is bound at residue tyrosine 56. Position 73 (aspartate 73) interacts with ATP. Mg(2+) contacts are provided by aspartate 73 and glutamate 141. CTP is bound by residues 148–150, 188–193, and lysine 224; these read DIE and KTKPTQ. Residues 188-193 and lysine 224 each bind UTP; that span reads KTKPTQ. Position 240–242 (240–242) interacts with ATP; that stretch reads RDA. Positions 292–540 constitute a Glutamine amidotransferase type-1 domain; it reads TIGIVGKYVE…VRASLGEKIK (249 aa). An L-glutamine-binding site is contributed by glycine 360. Cysteine 387 functions as the Nucleophile; for glutamine hydrolysis in the catalytic mechanism. L-glutamine is bound by residues 388–391, glutamate 411, and arginine 468; that span reads MGMQ. Active-site residues include histidine 513 and glutamate 515.

This sequence belongs to the CTP synthase family. As to quaternary structure, homotetramer.

The catalysed reaction is UTP + L-glutamine + ATP + H2O = CTP + L-glutamate + ADP + phosphate + 2 H(+). It catalyses the reaction L-glutamine + H2O = L-glutamate + NH4(+). It carries out the reaction UTP + NH4(+) + ATP = CTP + ADP + phosphate + 2 H(+). The protein operates within pyrimidine metabolism; CTP biosynthesis via de novo pathway; CTP from UDP: step 2/2. Its activity is regulated as follows. Allosterically activated by GTP, when glutamine is the substrate; GTP has no effect on the reaction when ammonia is the substrate. The allosteric effector GTP functions by stabilizing the protein conformation that binds the tetrahedral intermediate(s) formed during glutamine hydrolysis. Inhibited by the product CTP, via allosteric rather than competitive inhibition. In terms of biological role, catalyzes the ATP-dependent amination of UTP to CTP with either L-glutamine or ammonia as the source of nitrogen. Regulates intracellular CTP levels through interactions with the four ribonucleotide triphosphates. This chain is CTP synthase, found in Methanocaldococcus jannaschii (strain ATCC 43067 / DSM 2661 / JAL-1 / JCM 10045 / NBRC 100440) (Methanococcus jannaschii).